The following is a 394-amino-acid chain: S-adenosylmethionine synthase 1 (394 aa).

E11 is a Mg(2+) binding site. Residue H17 participates in ATP binding. Residue E45 coordinates K(+). L-methionine contacts are provided by E58 and Q101. ATP is bound by residues 169–171 (DGK), 237–240 (SGRF), D248, 254–255 (RK), A271, K275, and K279. D248 lines the L-methionine pocket. Residue K279 coordinates L-methionine.

This sequence belongs to the AdoMet synthase family. In terms of assembly, homotetramer. Mn(2+) serves as cofactor. The cofactor is Mg(2+). It depends on Co(2+) as a cofactor. K(+) is required as a cofactor.

Its subcellular location is the cytoplasm. It carries out the reaction L-methionine + ATP + H2O = S-adenosyl-L-methionine + phosphate + diphosphate. Its pathway is amino-acid biosynthesis; S-adenosyl-L-methionine biosynthesis; S-adenosyl-L-methionine from L-methionine: step 1/1. Functionally, catalyzes the formation of S-adenosylmethionine from methionine and ATP. The reaction comprises two steps that are both catalyzed by the same enzyme: formation of S-adenosylmethionine (AdoMet) and triphosphate, and subsequent hydrolysis of the triphosphate. The sequence is that of S-adenosylmethionine synthase 1 (SAMS1) from Triticum monococcum (Einkorn wheat).